Here is a 153-residue protein sequence, read N- to C-terminus: Large ribosomal subunit protein bL9 (153 aa).

Belongs to the bacterial ribosomal protein bL9 family.

Binds to the 23S rRNA. This Koribacter versatilis (strain Ellin345) protein is Large ribosomal subunit protein bL9.